The chain runs to 170 residues: Putative pre-16S rRNA nuclease (170 aa).

A disordered region spans residues 1-25 (MVPAQHRPPDRPGDPAHDPGRGRRL). The segment covering 7 to 21 (RPPDRPGDPAHDPGR) has biased composition (basic and acidic residues).

This sequence belongs to the YqgF nuclease family.

The protein localises to the cytoplasm. Could be a nuclease involved in processing of the 5'-end of pre-16S rRNA. This is Putative pre-16S rRNA nuclease from Mycobacterium tuberculosis (strain ATCC 25177 / H37Ra).